The chain runs to 124 residues: Aspartate 1-decarboxylase (124 aa).

The active-site Schiff-base intermediate with substrate; via pyruvic acid is S25. A Pyruvic acid (Ser) modification is found at S25. T57 lines the substrate pocket. Y58 serves as the catalytic Proton donor. 71–73 contacts substrate; it reads GAA.

Belongs to the PanD family. Heterooctamer of four alpha and four beta subunits. Pyruvate is required as a cofactor. Is synthesized initially as an inactive proenzyme, which is activated by self-cleavage at a specific serine bond to produce a beta-subunit with a hydroxyl group at its C-terminus and an alpha-subunit with a pyruvoyl group at its N-terminus.

It is found in the cytoplasm. The catalysed reaction is L-aspartate + H(+) = beta-alanine + CO2. It participates in cofactor biosynthesis; (R)-pantothenate biosynthesis; beta-alanine from L-aspartate: step 1/1. Functionally, catalyzes the pyruvoyl-dependent decarboxylation of aspartate to produce beta-alanine. This Bdellovibrio bacteriovorus (strain ATCC 15356 / DSM 50701 / NCIMB 9529 / HD100) protein is Aspartate 1-decarboxylase.